We begin with the raw amino-acid sequence, 94 residues long: Co-chaperonin GroES (94 aa).

Belongs to the GroES chaperonin family. As to quaternary structure, heptamer of 7 subunits arranged in a ring. Interacts with the chaperonin GroEL.

It localises to the cytoplasm. In terms of biological role, together with the chaperonin GroEL, plays an essential role in assisting protein folding. The GroEL-GroES system forms a nano-cage that allows encapsulation of the non-native substrate proteins and provides a physical environment optimized to promote and accelerate protein folding. GroES binds to the apical surface of the GroEL ring, thereby capping the opening of the GroEL channel. This is Co-chaperonin GroES from Geobacillus sp. (strain WCH70).